A 141-amino-acid polypeptide reads, in one-letter code: Light-regulated protein 1, chloroplastic (141 aa).

The transit peptide at 1 to 41 (MQGALFIKPTILLPLPSSVSSPKLTFLLPHATKASRLSSLR) directs the protein to the chloroplast. The span at 35 to 51 (SRLSSLRSNNSSSSSSL) shows a compositional bias: low complexity. Residues 35 to 58 (SRLSSLRSNNSSSSSSLTSDPNTV) form a disordered region. The 2 X 15 AA approximate repeats stretch occupies residues 58–132 (VDYNSSILSV…ACDDLGGEFC (75 aa)). 2 tandem repeats follow at residues 67–81 (VFPA…GYAC) and 118–132 (VFRE…GEFC).

Component of high molecular weight thylakoid LFNRs-containing protein complexes containing LIR1, LFNR1, LFNR2, TIC62 and TROL proteins. Interacts directly with LFNR1 and LFNR2; LIR1 increases the affinity of LFNR1 and LFNR2 for TIC62 and subsequent thylakoid relocalization. May form interchain disulfide bonds with LFNR1 and LFNR2.

The protein localises to the plastid. It is found in the chloroplast thylakoid membrane. It localises to the chloroplast envelope. Its subcellular location is the chloroplast stroma. Its function is as follows. Thylakoid-determinant subunit of high molecular weight LFNRs-containing protein complexes. This is Light-regulated protein 1, chloroplastic from Arabidopsis thaliana (Mouse-ear cress).